A 332-amino-acid chain; its full sequence is MNWLTNVVRPKIRNILRRETPENLWIKCPDSGHLVFYKDVEANQFVIPGSNYHMRMGAAARLKSIFDNETWYDIALPEVTPDPLKFRDERKYVDRIKDARAKTGMNDAIKVGYGKLEGGAVVVAVQDFDFMGGSLGMAAGEAIVRGIELAVEKQSPFILFAASGGARMQEGILSLMQMPRTTVGVQMLRDAKLPYIVVLTNPTTGGVTASYAMLGDVQIAEPGALIGFAGARVIEQTIREKLPEGFQRAEYLKEHGMIDMVVHRHDLKATLARLCRLLTKAPMPEVIVESEPEPEPEPVVAEIIPPTSDLPVSAPAPAPVAAQTPAPAAPSA.

The 270-residue stretch at 24–293 (LWIKCPDSGH…PEVIVESEPE (270 aa)) folds into the CoA carboxyltransferase N-terminal domain. The interval 288-332 (VESEPEPEPEPVVAEIIPPTSDLPVSAPAPAPVAAQTPAPAAPSA) is disordered. Positions 298 to 332 (PVVAEIIPPTSDLPVSAPAPAPVAAQTPAPAAPSA) are enriched in low complexity.

The protein belongs to the AccD/PCCB family. As to quaternary structure, acetyl-CoA carboxylase is a heterohexamer composed of biotin carboxyl carrier protein (AccB), biotin carboxylase (AccC) and two subunits each of ACCase subunit alpha (AccA) and ACCase subunit beta (AccD).

It localises to the cytoplasm. It carries out the reaction N(6)-carboxybiotinyl-L-lysyl-[protein] + acetyl-CoA = N(6)-biotinyl-L-lysyl-[protein] + malonyl-CoA. Its pathway is lipid metabolism; malonyl-CoA biosynthesis; malonyl-CoA from acetyl-CoA: step 1/1. Its function is as follows. Component of the acetyl coenzyme A carboxylase (ACC) complex. Biotin carboxylase (BC) catalyzes the carboxylation of biotin on its carrier protein (BCCP) and then the CO(2) group is transferred by the transcarboxylase to acetyl-CoA to form malonyl-CoA. In Rhodopseudomonas palustris (strain BisB18), this protein is Acetyl-coenzyme A carboxylase carboxyl transferase subunit beta.